Here is a 990-residue protein sequence, read N- to C-terminus: Aminopeptidase Q (990 aa).

Residues 2–13 (GPPSSSGFYVSR) lie on the Cytoplasmic side of the membrane. A helical; Signal-anchor for type II membrane protein membrane pass occupies residues 14–34 (AVALLLAGLVAALLLALAVLA). Over 35-990 (ALYGHCERVP…RIAAWLRRNT (956 aa)) the chain is Lumenal. The disordered stretch occupies residues 48-91 (LPGLRDLEAESSPPLRQKPTPTPKPSSARELAVTTTPSNWRPPG). N-linked (GlcNAc...) asparagine glycans are attached at residues Asn-132 and Asn-168. Glu-240 contacts substrate. Asn-261, Asn-288, Asn-319, and Asn-346 each carry an N-linked (GlcNAc...) asparagine glycan. Position 379–383 (379–383 (HAMEN)) interacts with substrate. Zn(2+) is bound at residue His-415. The active-site Proton acceptor is the Glu-416. Zn(2+)-binding residues include His-419 and Glu-438. Catalysis depends on Tyr-503, which acts as the Proton donor. 2 N-linked (GlcNAc...) asparagine glycosylation sites follow: Asn-607 and Asn-653.

The protein belongs to the peptidase M1 family. As to quaternary structure, homodimer. Zn(2+) serves as cofactor. In terms of processing, N-glycosylated. As to expression, specifically expressed in placenta and not in other tissues. Mainly found at the cell surface region of the extravillous trophoblasts. Detected on extravillous trophoblasts in the outer layer of the chorion laeve in the fetal membrane Not detected on either fetal amnionic epithelial cells or maternal decidual cells. Also detected in the migrating extravillous trophoblasts in the maternal decidual tissues (at protein level).

The protein resides in the membrane. Its activity is regulated as follows. Inhibited by bestatin. In terms of biological role, metalloprotease which may be important for placentation by regulating biological activity of key peptides at the embryo-maternal interface. On synthetic substrates it shows a marked preference for Leu-4-methylcoumaryl-7-amide (Leu-MCA) over Met-MCA, Arg-LCA and Lys-LCA. Cleaves the N-terminal amino acid of several peptides such as angiotensin-3, kisspeptin-10 and endokinin C. This is Aminopeptidase Q from Homo sapiens (Human).